The sequence spans 532 residues: Small ribosomal subunit protein uS2cz (532 aa).

The segment at 1-271 is N-terminal extension; the sequence is METLEKNFKK…SPISSKEKKA (271 aa). TRAM domains are found at residues 38-97, 127-186, and 197-260; these read ALQA…SILN, DFKV…KPIL, and NQMI…KILK.

This sequence belongs to the universal ribosomal protein uS2 family.

It is found in the plastid. Its subcellular location is the chloroplast. The sequence is that of Small ribosomal subunit protein uS2cz (rps2-1) from Tetradesmus obliquus (Green alga).